The chain runs to 238 residues: Ribosomal RNA small subunit methyltransferase G (238 aa).

Residues G78, F83, 129-130 (AE), and R148 contribute to the S-adenosyl-L-methionine site. A disordered region spans residues 216–238 (EKKKETPKKYPRKAGTPAKNPIK).

Belongs to the methyltransferase superfamily. RNA methyltransferase RsmG family.

Its subcellular location is the cytoplasm. In terms of biological role, specifically methylates the N7 position of a guanine in 16S rRNA. The sequence is that of Ribosomal RNA small subunit methyltransferase G from Lactococcus lactis subsp. lactis (strain IL1403) (Streptococcus lactis).